The primary structure comprises 302 residues: Plant UBX domain-containing protein 3 (302 aa).

2 disordered regions span residues 1–64 (MSSK…PKHD) and 79–98 (VEGP…TGRL). The region spanning 113-177 (PVIHNIIFWS…NLMRRDEKCP (65 aa)) is the SEP domain. Positions 224 to 301 (ETLPSTSIQL…GLASSVVIQK (78 aa)) constitute a UBX domain.

Interacts with CDC48A.

This Arabidopsis thaliana (Mouse-ear cress) protein is Plant UBX domain-containing protein 3.